The primary structure comprises 73 residues: Gas vesicle protein M2 (73 aa).

This sequence belongs to the gas vesicle GvpA family. In terms of assembly, gvpF to GvpM interact with each other in vitro, and may form multi-subunit complex(es). Might interact with GvpA.

It is found in the gas vesicle. In terms of biological role, proteins GvpF to GvpM might be involved in nucleating gas vesicle formation. A minor component of the gas vesicle. Gas vesicles are hollow, gas filled proteinaceous nanostructures found in several microbial planktonic microorganisms. They allow positioning of halobacteria at the optimal depth for growth in the poorly aerated, shallow brine pools of their habitat. Functionally, expression of 2 c-vac DNA fragments containing 2 divergently transcribed regions (gvpE-gvpF-gvpG-gvpH-gvpI-gvpJ-gvpK-gvpL-gvpM and gvpA-gvpC-gvpN-gvpO) allows H.volcanii to produce gas vesicles. This Halobacterium salinarum (strain ATCC 700922 / JCM 11081 / NRC-1) (Halobacterium halobium) protein is Gas vesicle protein M2.